A 450-amino-acid polypeptide reads, in one-letter code: Exodeoxyribonuclease 7 large subunit (450 aa).

Belongs to the XseA family. In terms of assembly, heterooligomer composed of large and small subunits.

It is found in the cytoplasm. The catalysed reaction is Exonucleolytic cleavage in either 5'- to 3'- or 3'- to 5'-direction to yield nucleoside 5'-phosphates.. In terms of biological role, bidirectionally degrades single-stranded DNA into large acid-insoluble oligonucleotides, which are then degraded further into small acid-soluble oligonucleotides. In Listeria monocytogenes serovar 1/2a (strain ATCC BAA-679 / EGD-e), this protein is Exodeoxyribonuclease 7 large subunit.